A 227-amino-acid chain; its full sequence is Large ribosomal subunit protein uL1 (227 aa).

It belongs to the universal ribosomal protein uL1 family. In terms of assembly, part of the 50S ribosomal subunit.

Functionally, binds directly to 23S rRNA. The L1 stalk is quite mobile in the ribosome, and is involved in E site tRNA release. Its function is as follows. Protein L1 is also a translational repressor protein, it controls the translation of the L11 operon by binding to its mRNA. This chain is Large ribosomal subunit protein uL1, found in Brevibacillus brevis (strain 47 / JCM 6285 / NBRC 100599).